The chain runs to 156 residues: ATP synthase subunit b (156 aa).

A helical transmembrane segment spans residues 7–27; it reads LFVQAIVFAILVWFTMKFVWP.

The protein belongs to the ATPase B chain family. As to quaternary structure, F-type ATPases have 2 components, F(1) - the catalytic core - and F(0) - the membrane proton channel. F(1) has five subunits: alpha(3), beta(3), gamma(1), delta(1), epsilon(1). F(0) has three main subunits: a(1), b(2) and c(10-14). The alpha and beta chains form an alternating ring which encloses part of the gamma chain. F(1) is attached to F(0) by a central stalk formed by the gamma and epsilon chains, while a peripheral stalk is formed by the delta and b chains.

It localises to the cell inner membrane. In terms of biological role, f(1)F(0) ATP synthase produces ATP from ADP in the presence of a proton or sodium gradient. F-type ATPases consist of two structural domains, F(1) containing the extramembraneous catalytic core and F(0) containing the membrane proton channel, linked together by a central stalk and a peripheral stalk. During catalysis, ATP synthesis in the catalytic domain of F(1) is coupled via a rotary mechanism of the central stalk subunits to proton translocation. Component of the F(0) channel, it forms part of the peripheral stalk, linking F(1) to F(0). The protein is ATP synthase subunit b of Polaromonas sp. (strain JS666 / ATCC BAA-500).